The chain runs to 87 residues: UPF0250 protein ECA1299 (87 aa).

This sequence belongs to the UPF0250 family.

In Pectobacterium atrosepticum (strain SCRI 1043 / ATCC BAA-672) (Erwinia carotovora subsp. atroseptica), this protein is UPF0250 protein ECA1299.